A 103-amino-acid chain; its full sequence is Large ribosomal subunit protein bL21 (103 aa).

It belongs to the bacterial ribosomal protein bL21 family. Part of the 50S ribosomal subunit. Contacts protein L20.

Functionally, this protein binds to 23S rRNA in the presence of protein L20. In Kineococcus radiotolerans (strain ATCC BAA-149 / DSM 14245 / SRS30216), this protein is Large ribosomal subunit protein bL21.